The following is a 91-amino-acid chain: Protein transport protein sft1 (91 aa).

Residues 1–68 lie on the Cytoplasmic side of the membrane; sequence MNDQNERRLE…RVVRSAGRRR (68 aa). The helical; Anchor for type IV membrane protein transmembrane segment at 69–86 threads the bilayer; that stretch reads IMTMVLAIVGSILIIYYA. Over 87 to 91 the chain is Lumenal; it reads SKWFF.

Component of a SNARE complex consisting of sed5, gos1, ykt6 and sft1.

It is found in the golgi apparatus membrane. Functionally, vesicle SNARE required for retrograde transport within the Golgi complex. In Schizosaccharomyces pombe (strain 972 / ATCC 24843) (Fission yeast), this protein is Protein transport protein sft1 (sft1).